Here is a 226-residue protein sequence, read N- to C-terminus: Large ribosomal subunit protein uL1 (226 aa).

Belongs to the universal ribosomal protein uL1 family. As to quaternary structure, part of the 50S ribosomal subunit.

In terms of biological role, binds directly to 23S rRNA. The L1 stalk is quite mobile in the ribosome, and is involved in E site tRNA release. Its function is as follows. Protein L1 is also a translational repressor protein, it controls the translation of the L11 operon by binding to its mRNA. This chain is Large ribosomal subunit protein uL1, found in Borreliella afzelii (strain PKo) (Borrelia afzelii).